Here is a 349-residue protein sequence, read N- to C-terminus: Two pore potassium channel b (349 aa).

Residues 1–53 (MAALDQQPLLHDGGDQKPPPEGAARRFRRCRTAPSSEPPPTDKDNSSAADAPP) form a disordered region. Residues 1–66 (MAALDQQPLL…FTGGGRPSFR (66 aa)) are Cytoplasmic-facing. The chain crosses the membrane as a helical span at residues 67–87 (LVGLLLVAYLLLGTIAFYLAM). The pore-forming intramembrane region spans 100–119 (DALYFCVVTMTTVGYGDLVP). Residues 123 to 143 (AAKLLACAFVFAGVAVVGTFL) form a helical membrane-spanning segment. Topologically, residues 144–180 (SKAADYLVEKQEALLFRALHSHTMVRAMEMNKVRYKL) are cytoplasmic. A helical membrane pass occupies residues 181 to 201 (YTAGLLLVAAVASGTVVLWKV). The pore-forming intramembrane region spans 208 to 227 (DAFYCVCATVTTLGYGDRSF). Residues 234-254 (AFAVAWITVSTVVVALFFLYA) form a helical membrane-spanning segment. The Cytoplasmic portion of the chain corresponds to 255 to 349 (AELYTERRQR…PTPDPPPSLR (95 aa)). EF-hand domains lie at 271–306 (LRRR…ELGK) and 310–345 (EDIS…PDPP). Ca(2+) is bound by residues Asp-284, Asp-286, Asp-288, Arg-290, Asp-295, Asp-323, Asp-325, Ser-327, Thr-329, and Asp-334. The interval 326–349 (HSGTLSPADLAAAQPTPDPPPSLR) is disordered.

The protein belongs to the two pore domain potassium channel (TC 1.A.1.7) family. In terms of assembly, homodimer.

Its subcellular location is the vacuole membrane. In terms of biological role, highly selective inward-rectifying potassium channel that is specifically located in the tonoplast of protein storage vacuoles. Functions independently of the voltage difference across the membrane. The polypeptide is Two pore potassium channel b (TPKB) (Oryza sativa subsp. japonica (Rice)).